The primary structure comprises 135 residues: uncharacterized protein (135 aa).

2 consecutive transmembrane segments (helical) span residues 11 to 31 (ILFF…GYLI) and 57 to 77 (LGTA…TDAI).

The protein resides in the cell membrane. This is an uncharacterized protein from Methanocaldococcus jannaschii (strain ATCC 43067 / DSM 2661 / JAL-1 / JCM 10045 / NBRC 100440) (Methanococcus jannaschii).